Consider the following 156-residue polypeptide: Transcription inhibitor protein Gfh1 (156 aa).

Residues 1-74 (MAREVKLTKA…LEDILSRAVI (74 aa)) adopt a coiled-coil conformation. Zn(2+) contacts are provided by Glu-20 and Glu-24.

This sequence belongs to the GreA/GreB family. In terms of assembly, interacts with RNAP.

Its function is as follows. Inhibits all catalytic activities of RNA polymerase (RNAP) by partially occluding its substrate-binding site and preventing NTP binding. The protein is Transcription inhibitor protein Gfh1 (gfh1) of Thermus thermophilus (strain ATCC 27634 / DSM 579 / HB8).